Here is a 266-residue protein sequence, read N- to C-terminus: Undecaprenyl-diphosphatase (266 aa).

7 helical membrane-spanning segments follow: residues 8–28 (VLALVQGLTEFLPISSAAHLI), 39–59 (QGLAFDVATHVGSLAAVVIYF), 87–107 (WAVGLGTIPAGLAGLLFHDII), 113–133 (SAQVIAMATIGFAVLLLFADV), 188–208 (SFLLSIPIIALAGGFEILGLV), 219–239 (MIVLGALVAGVSAYLCIHYFL), and 246–266 (TMLPFVIYRLVLGAFLLFLFW).

The protein belongs to the UppP family.

The protein localises to the cell inner membrane. It carries out the reaction di-trans,octa-cis-undecaprenyl diphosphate + H2O = di-trans,octa-cis-undecaprenyl phosphate + phosphate + H(+). Its function is as follows. Catalyzes the dephosphorylation of undecaprenyl diphosphate (UPP). Confers resistance to bacitracin. In Thioalkalivibrio sulfidiphilus (strain HL-EbGR7), this protein is Undecaprenyl-diphosphatase.